The chain runs to 129 residues: Small ribosomal subunit protein bS6 (129 aa).

The span at 110-121 (FVRRDDERREDT) shows a compositional bias: basic and acidic residues. The interval 110–129 (FVRRDDERREDTVEAASSEE) is disordered.

This sequence belongs to the bacterial ribosomal protein bS6 family.

Binds together with bS18 to 16S ribosomal RNA. This chain is Small ribosomal subunit protein bS6, found in Aeromonas salmonicida (strain A449).